The chain runs to 693 residues: Glycine--tRNA ligase beta subunit (693 aa).

Residues Gln-65–Gly-74 show a composition bias toward basic and acidic residues. A disordered region spans residues Gln-65–Ser-84.

Belongs to the class-II aminoacyl-tRNA synthetase family. As to quaternary structure, tetramer of two alpha and two beta subunits.

The protein localises to the cytoplasm. It carries out the reaction tRNA(Gly) + glycine + ATP = glycyl-tRNA(Gly) + AMP + diphosphate. This chain is Glycine--tRNA ligase beta subunit, found in Marinobacter nauticus (strain ATCC 700491 / DSM 11845 / VT8) (Marinobacter aquaeolei).